Here is a 264-residue protein sequence, read N- to C-terminus: Large ribosomal subunit protein mL50 (264 aa).

A mitochondrion-targeting transit peptide spans 1-75 (MSSLLKLHCI…EEGTNEASSQ (75 aa)).

This sequence belongs to the mitochondrion-specific ribosomal protein mL50 family. In terms of assembly, component of the mitochondrial large ribosomal subunit (mt-LSU). Mature yeast 74S mitochondrial ribosomes consist of a small (37S) and a large (54S) subunit. The 37S small subunit contains a 15S ribosomal RNA (15S mt-rRNA) and 34 different proteins. The 54S large subunit contains a 21S rRNA (21S mt-rRNA) and 46 different proteins.

The protein localises to the mitochondrion. Component of the mitochondrial ribosome (mitoribosome), a dedicated translation machinery responsible for the synthesis of mitochondrial genome-encoded proteins, including at least some of the essential transmembrane subunits of the mitochondrial respiratory chain. The mitoribosomes are attached to the mitochondrial inner membrane and translation products are cotranslationally integrated into the membrane. The polypeptide is Large ribosomal subunit protein mL50 (MRPL13) (Saccharomyces cerevisiae (strain ATCC 204508 / S288c) (Baker's yeast)).